The chain runs to 261 residues: Short-chain dehydrogenase/reductase ARMGADRAFT_1018421 (261 aa).

NADP(+) is bound by residues I21, D68, N95, K128, Y161, K165, V194, and T196. Catalysis depends on Y161, which acts as the Proton acceptor. The active-site Lowers pKa of active site Tyr is K165.

This sequence belongs to the short-chain dehydrogenases/reductases (SDR) family.

Its pathway is secondary metabolite biosynthesis. In terms of biological role, short-chain dehydrogenase/reductase, part of the gene cluster that mediates the biosynthesis of melleolides, a range of antifungal and phytotoxic polyketide derivatives composed of an orsellinic acid (OA) moiety esterified to various sesquiterpene alcohols. The first step in melleolides biosynthesis is performed by the delta(6)-protoilludene synthase PRO1 which catalyzes the cyclization of farnesyl diphosphate to protoilludene. The orsellinic acid synthase armB produces OA by condensing acetyl-CoA with 3 malonyl-CoA units in a three-round chain elongation reaction folowed by a C2-C7 ring closure. ArmB further catalyzes the trans-esterification of OA to the various sesquiterpene alcohols resulting from the hydroxylation of protoilludene. The melleolides cluster also includes 5 cytochrome P450 monooxygenases, 4 NAD(+)-dependent oxidoreductases, one flavin-dependent oxidoreductase, and one O-methyltransferase. The cytochrome P450 monooxygenases may be involved in protoilludene hydroxylation to elaborate melleolides with multiple alcohol groups, such as melleolide D, which carries alcohol functionalities at C-4, C-5, C-10, and C-13. The role of the NAD(+)-dependent enzymes remains unknown. Numerous melleolides, including arnamial, show 5'-O-methylation of the aromatic moiety which may be catalyzed by the methyltransferase encoded in the cluster. The flavin-dependent oxidoreductase might represent the dehydrogenase yielding the aldehyde in position 1 of arnamial and other melleolides. Finally, several halogenase localized outside of the cluster, are able to catalyze the transfer of a single chlorine atom to the melleolide backbone, resulting in a 6'-chloromelleolide product. The sequence is that of Short-chain dehydrogenase/reductase ARMGADRAFT_1018421 from Armillaria gallica (Bulbous honey fungus).